The following is an 872-amino-acid chain: Alanine--tRNA ligase (872 aa).

Zn(2+) contacts are provided by His567, His571, Cys669, and His673.

Belongs to the class-II aminoacyl-tRNA synthetase family. Zn(2+) serves as cofactor.

Its subcellular location is the cytoplasm. The catalysed reaction is tRNA(Ala) + L-alanine + ATP = L-alanyl-tRNA(Ala) + AMP + diphosphate. In terms of biological role, catalyzes the attachment of alanine to tRNA(Ala) in a two-step reaction: alanine is first activated by ATP to form Ala-AMP and then transferred to the acceptor end of tRNA(Ala). Also edits incorrectly charged Ser-tRNA(Ala) and Gly-tRNA(Ala) via its editing domain. The protein is Alanine--tRNA ligase of Streptococcus mutans serotype c (strain ATCC 700610 / UA159).